Here is a 415-residue protein sequence, read N- to C-terminus: Zona pellucida-like domain-containing protein 1 (415 aa).

Residues 1–19 (MERVWLLFLLAIRVSPGSA) form the signal peptide. Over 20-373 (QFNSYNCDAN…PFQLNAVTSS (354 aa)) the chain is Extracellular. Residues 43–320 (YCGVQAITMK…PICGNRKRRD (278 aa)) enclose the ZP domain. 2 cysteine pairs are disulfide-bonded: Cys-44-Cys-155 and Cys-79-Cys-104. N-linked (GlcNAc...) asparagine glycosylation is present at Asn-164. Disulfide bonds link Cys-235-Cys-296 and Cys-255-Cys-313. The chain crosses the membrane as a helical span at residues 374 to 394 (LISGMVILGVLCFSLLLCSLA). Residues 395–415 (LLHRKGSTSLVLNGVRNPVFE) are Cytoplasmic-facing.

Post-translationally, proteolytically cleaved before the transmembrane segment to yield the secreted form found in the extracellular matrix of the cupula.

Its subcellular location is the cytoplasmic vesicle membrane. It localises to the secreted. The protein resides in the extracellular space. It is found in the extracellular matrix. Functionally, glycoprotein which is a component of the gelatinous extracellular matrix in the cupulae of the vestibular organ. This chain is Zona pellucida-like domain-containing protein 1 (Zpld1), found in Mus musculus (Mouse).